Here is a 258-residue protein sequence, read N- to C-terminus: Pimeloyl-[acyl-carrier protein] methyl ester esterase (258 aa).

The 227-residue stretch at 16 to 242 (LVLLHGWGLN…AAHAPFISHP (227 aa)) folds into the AB hydrolase-1 domain. Substrate-binding positions include Trp22, 82-83 (SM), and 143-147 (FLALQ). The active-site Nucleophile is the Ser82. Active-site residues include Asp207 and His235. Position 235 (His235) interacts with substrate.

The protein belongs to the AB hydrolase superfamily. Carboxylesterase BioH family. As to quaternary structure, monomer.

It localises to the cytoplasm. It carries out the reaction 6-carboxyhexanoyl-[ACP] methyl ester + H2O = 6-carboxyhexanoyl-[ACP] + methanol + H(+). The protein operates within cofactor biosynthesis; biotin biosynthesis. The physiological role of BioH is to remove the methyl group introduced by BioC when the pimeloyl moiety is complete. It allows to synthesize pimeloyl-ACP via the fatty acid synthetic pathway through the hydrolysis of the ester bonds of pimeloyl-ACP esters. The protein is Pimeloyl-[acyl-carrier protein] methyl ester esterase of Yersinia pseudotuberculosis serotype O:1b (strain IP 31758).